The following is a 412-amino-acid chain: Serine hydroxymethyltransferase (412 aa).

Residues L117 and 121–123 (GHL) each bind (6S)-5,6,7,8-tetrahydrofolate. N6-(pyridoxal phosphate)lysine is present on K226. Residue 349–351 (SPF) participates in (6S)-5,6,7,8-tetrahydrofolate binding.

It belongs to the SHMT family. Homodimer. Pyridoxal 5'-phosphate is required as a cofactor.

It is found in the cytoplasm. The catalysed reaction is (6R)-5,10-methylene-5,6,7,8-tetrahydrofolate + glycine + H2O = (6S)-5,6,7,8-tetrahydrofolate + L-serine. It functions in the pathway one-carbon metabolism; tetrahydrofolate interconversion. Its pathway is amino-acid biosynthesis; glycine biosynthesis; glycine from L-serine: step 1/1. In terms of biological role, catalyzes the reversible interconversion of serine and glycine with tetrahydrofolate (THF) serving as the one-carbon carrier. This reaction serves as the major source of one-carbon groups required for the biosynthesis of purines, thymidylate, methionine, and other important biomolecules. Also exhibits THF-independent aldolase activity toward beta-hydroxyamino acids, producing glycine and aldehydes, via a retro-aldol mechanism. The protein is Serine hydroxymethyltransferase of Geobacillus kaustophilus (strain HTA426).